A 538-amino-acid polypeptide reads, in one-letter code: uncharacterized protein (538 aa).

Low complexity predominate over residues methionine 1–serine 13. The disordered stretch occupies residues methionine 1–phenylalanine 43. Helical transmembrane passes span isoleucine 97–phenylalanine 117, valine 134–alanine 154, lysine 163–alanine 183, phenylalanine 194–methionine 214, isoleucine 226–alanine 246, tryptophan 254–lysine 274, proline 328–leucine 348, alanine 367–phenylalanine 387, leucine 408–serine 428, valine 434–phenylalanine 454, leucine 458–isoleucine 478, and glycine 504–phenylalanine 524.

Belongs to the major facilitator superfamily. CAR1 family.

The protein resides in the endoplasmic reticulum. The protein localises to the membrane. This is an uncharacterized protein from Schizosaccharomyces pombe (strain 972 / ATCC 24843) (Fission yeast).